We begin with the raw amino-acid sequence, 372 residues long: Peptide chain release factor 2 (372 aa).

Q253 is modified (N5-methylglutamine).

It belongs to the prokaryotic/mitochondrial release factor family. Methylated by PrmC. Methylation increases the termination efficiency of RF2.

It localises to the cytoplasm. In terms of biological role, peptide chain release factor 2 directs the termination of translation in response to the peptide chain termination codons UGA and UAA. The protein is Peptide chain release factor 2 of Mycolicibacterium gilvum (strain PYR-GCK) (Mycobacterium gilvum (strain PYR-GCK)).